A 263-amino-acid polypeptide reads, in one-letter code: Metaxin-2 (263 aa).

Residue serine 2 is modified to N-acetylserine.

Belongs to the metaxin family. As to quaternary structure, interacts with MTX1/metaxin-1. Associates with the mitochondrial contact site and cristae organizing system (MICOS) complex, composed of at least MICOS10/MIC10, CHCHD3/MIC19, CHCHD6/MIC25, APOOL/MIC27, IMMT/MIC60, APOO/MIC23/MIC26 and QIL1/MIC13. This complex was also known under the names MINOS or MitOS complex. The MICOS complex associates with mitochondrial outer membrane proteins SAMM50, MTX1 and MTX2 (together described as components of the mitochondrial outer membrane sorting assembly machinery (SAM) complex) and DNAJC11, mitochondrial inner membrane protein TMEM11 and with HSPA9. The MICOS and SAM complexes together with DNAJC11 are part of a large protein complex spanning both membranes termed the mitochondrial intermembrane space bridging (MIB) complex.

It localises to the mitochondrion outer membrane. Its subcellular location is the mitochondrion. In terms of biological role, involved in transport of proteins into the mitochondrion. The protein is Metaxin-2 (Mtx2) of Mus musculus (Mouse).